A 75-amino-acid chain; its full sequence is F1845 fimbrial adhesin operon regulatory protein DaaF (75 aa).

May have a possible regulatory function on the expression of the other daa genes. The sequence is that of F1845 fimbrial adhesin operon regulatory protein DaaF (daaF) from Escherichia coli.